Reading from the N-terminus, the 530-residue chain is MSGNVCNRCNDGLMVNYPFLSCQKCIYLAKKNNKCLGVSIKGKHCPYKPNSNCGNIFCKNHTNQFRLHGKAHTHKLCSSGNDCFREDVTIKNLKQILPIDYPFAQCETCRNNERSYFNNKQQRVKQHNAESKDTMICKKCFVELPTNKFPKTSRGKISHYCKSCFDKRAIIERNRIIDPIKERERSKKYENRPDIKQKRKKYRQCKVVKIRNAISLKKSREKLRAADPENYLKKKAEQQAKHRQKYPEKNGITTIRYNTISSDKYMRYKSVAIEKGLEFTLTKQEFEKLVESNCYYCDCKYKNTINGIDRINNNVGYILDNCVTACSMCNNMKNTLNVETFIVMCMTIANYFKYYRTDIFVNVFNNYESASYNNYKNRALKKDLEFQLSNKEFKELQQKPCYLCGRKSNDKHTNGVDRVCNEEGYIPTNCRSCCGDCNYLKKDYKLDNVVFRCAFIALMHKNNAKKLQDDWKPSRFHESNDKKLSKEENREIKLSIRENKEKQRKKSVEKSVSKLQNQLNRLLNKNTIEV.

Residues 485–529 (SKEENREIKLSIRENKEKQRKKSVEKSVSKLQNQLNRLLNKNTIE) are a coiled coil.

This is an uncharacterized protein from Acanthamoeba polyphaga (Amoeba).